The following is a 359-amino-acid chain: MPNKTVLHSKHLESGAKMVDFHGWEMPINYGSQIEEHHAVRRTAGMFDVSHMTIVDVVGEQAQDYLRHLLANDVAKLKERGKALYSGMLNEEGGVVDDLIVYHFETTNYRLVVNSATRQKDMDWLNAQAEGFDVTITERPEFAMIAVQGPQAKEKAATLFSSAQNEAVAGMKPFFGVQAEDLFIATTGYTGEAGYEIMVPNEQAADFWQKLLDAGVAPCGLGARDTLRLEAGMNLYGQDMDETISPLAANMGWTITWEPAERNFVGRKALEAQKAAGTDKLVGLVLTEKGVLRHGQAVQVEGGEGIITSGTFSPTLGHSIAMARVPASVGDTAQVEMRKKWVTVNVVKPSFVRNGKSVL.

Belongs to the GcvT family. The glycine cleavage system is composed of four proteins: P, T, L and H.

It catalyses the reaction N(6)-[(R)-S(8)-aminomethyldihydrolipoyl]-L-lysyl-[protein] + (6S)-5,6,7,8-tetrahydrofolate = N(6)-[(R)-dihydrolipoyl]-L-lysyl-[protein] + (6R)-5,10-methylene-5,6,7,8-tetrahydrofolate + NH4(+). The glycine cleavage system catalyzes the degradation of glycine. The chain is Aminomethyltransferase from Pseudoalteromonas atlantica (strain T6c / ATCC BAA-1087).